The sequence spans 228 residues: Small ribosomal subunit protein uS7A (228 aa).

Belongs to the universal ribosomal protein uS7 family.

This is Small ribosomal subunit protein uS7A (RpS5a) from Drosophila melanogaster (Fruit fly).